Consider the following 479-residue polypeptide: PTS system MurNAc-GlcNAc-specific EIIBC component (479 aa).

The 83-residue stretch at 5-87 (QILAEHIIDA…SELSGAPLGE (83 aa)) folds into the PTS EIIB type-1 domain. Cys27 serves as the catalytic Phosphocysteine intermediate; for EIIB activity. The PTS EIIC type-1 domain maps to 125–479 (KTIANIFIPL…AMRESDTLGD (355 aa)). Helical transmembrane passes span 130–150 (IFIPLIPAFIGAGLIGGIAAV), 169–189 (VTVFNVIKDGMLAYLAIFTGI), 195–215 (FGATPGLGGVIGGTTLLTGLT), 229–249 (LQPGQGGIIGVIFAVWLLSII), 269–289 (ITLFIIGLLTIFIFMPLAGFV), 303–323 (IGGVFSGFIIGAFFLPLVMLG), 344–364 (LLPIAAMAGAGQVGAALALWV), 379–399 (ALPVGFLGIGEPLIYGVTLPL), 403–423 (FITACIGGGIGGAVIGGIGHI), and 445–465 (LGYIAGLLVAYAGGFIFTYFF).

The protein resides in the cell membrane. The enzyme catalyses N-acetyl-beta-D-muramate-(1-&gt;4)-N-acetyl-D-glucosamine(out) + N(pros)-phospho-L-histidyl-[protein] = 6-phospho-N-acetyl-beta-D-muramate-(1-&gt;4)-N-acetyl-D-glucosamine(in) + L-histidyl-[protein]. Its pathway is cell wall biogenesis; peptidoglycan recycling. The phosphoenolpyruvate-dependent sugar phosphotransferase system (sugar PTS), a major carbohydrate active transport system, catalyzes the phosphorylation of incoming sugar substrates concomitantly with their translocation across the cell membrane. This system is involved in the uptake and phosphorylation of MurNAc-GlcNAc, the principle peptidoglycan turnover product of S.aureus, yielding cytoplasmic MurNAc 6P-GlcNAc. In Staphylococcus saprophyticus subsp. saprophyticus (strain ATCC 15305 / DSM 20229 / NCIMB 8711 / NCTC 7292 / S-41), this protein is PTS system MurNAc-GlcNAc-specific EIIBC component.